Reading from the N-terminus, the 1274-residue chain is MSGSSAAPGPGSGSSPAACRFAHYFVLCGIDADSGLEPDELAGENFDQSPLRRTFKSKVLAHYPQNIEWNPFDQDAVNMLCMPKGLSFRTQADNKEPQFHSFIITREDGSRTYGFVLTFYEEVTSKQICTAMQTLYQMHNAEQYSSVYASSSCSMDSLASSIDEGDATSLLKLQRYNSYDINRDTLYVSKSICLITPLPFMQACKKFLFQLHKAVTSQQPPPLPLESYIHNILYEVPLPPPGRSLKFYGVYEPVICQRPGPNELPLSDYPLREACELLGLENLVQVFTCVLLEMQTLLYSQDYQRLMTVAEGITTLLFPFQWQHVYVPILPASLLHFLDAPVPYLMGLQSKEGTDRSKLELPQEANLCFVDIDNHFIELPEEFPQFPNKVDFIQELSEVLLQFGIPPEGSLHSSESATKLKNMVLKDLANDKKNGNVPNNSVSVYELLKGSETIARLQALAKRTGVTMEKIDLPASLSEKEKDLKLQCEEADLRDSQLNVQLREVFANRFTQMFADYEAFVIQTAQDMESWLTNREQMQNFDKASFLSDQPEPYLPFLSRFIETQMFATFIDNKIMSQWEEKDPLLRVFDSRIEKIRLYNVRAPTLRTSIYQKCSSLKEAAQSIEQRLMKMDHTAIHPHLLDMKIGQGKYEQGFFPKLQSDVLATGPANNNRWVSRSATAQRRKERLRQSSEHIGLDSDLREKYMQEARSLGKNLRQPKLSDLSPAVIAQTNWKFVEGLLKECRMKTKRMLVEKMGHEAVELGHGEANITGLEENTLIASLCDLLERIWSHGLLVKQGKSALWSHLLQFQDREEKQEHLTDSPVALGPERRKSDSGVMLPTLRVSLIQDMRHIQNMTEIKTDVGRARAWIRLSLEKKLLSQHLKQLLSNQPLTKKLYKRYAFLRCEEEREQFLYHLLSLNAVDYFCFTSVFTTIMIPYRSVIIPIKKLSNAIITSNPWICVSGELGDTGVMQIPKNLLEMTFECQNLGKLTTVQIGHDNSGLLAKWLVDCVMVRNEITGHTYRFPCGRWLGKGVDDGSLERILIGELMTSASDEDLGKQCRTPPQQKSPTTTRRLSITSLTGKPAKPNAGQIQEGIGEAVNNIVKHFHKPEKERGSLTVLLCGENGLVAALEQVFHHGFKSARIFHKNVFIWDFVEKAVAYFETTDQILDNEGDVLIQKPSSKTFCHYVNAINTAPRNIGKDGKFQILVCLGTRDHLLPQWIPLLAECPAITRMYEENALLRDHMTVNSLIRILQTIQDFTIVLEGSLIKGVDV.

Serine 2 carries the post-translational modification N-acetylserine. Residues 39 to 244 (DELAGENFDQ…EVPLPPPGRS (206 aa)) form the uDENN domain. Phosphoserine occurs at positions 49 and 178. In terms of domain architecture, cDENN spans 263–399 (ELPLSDYPLR…VDFIQELSEV (137 aa)). Residues 401-581 (LQFGIPPEGS…DNKIMSQWEE (181 aa)) form the dDENN domain. In terms of domain architecture, RUN 1 spans 772–932 (LEENTLIASL…DYFCFTSVFT (161 aa)). Serine 822 is subject to Phosphoserine. Residues 916–936 (LLSLNAVDYFCFTSVFTTIMI) traverse the membrane as a helical segment. The PLAT domain occupies 936–1044 (IPYRSVIIPI…DDGSLERILI (109 aa)). Residue threonine 1062 is modified to Phosphothreonine. Serine 1068, serine 1076, and serine 1079 each carry phosphoserine. An RUN 2 domain is found at 1118-1267 (TVLLCGENGL…QDFTIVLEGS (150 aa)).

It belongs to the RAB6IP1 family.

The protein localises to the membrane. Guanine nucleotide exchange factor (GEF) which may activate RAB39A and/or RAB39B. Promotes the exchange of GDP to GTP, converting inactive GDP-bound Rab proteins into their active GTP-bound form. The sequence is that of DENN domain-containing protein 5B (Dennd5b) from Mus musculus (Mouse).